A 160-amino-acid chain; its full sequence is Transcription antitermination protein NusB (160 aa).

This sequence belongs to the NusB family.

In terms of biological role, involved in transcription antitermination. Required for transcription of ribosomal RNA (rRNA) genes. Binds specifically to the boxA antiterminator sequence of the ribosomal RNA (rrn) operons. This Rhizobium leguminosarum bv. trifolii (strain WSM2304) protein is Transcription antitermination protein NusB.